Reading from the N-terminus, the 781-residue chain is DNA translocase FtsK 2 (781 aa).

Transmembrane regions (helical) follow at residues Leu-24–Leu-44, Phe-74–Leu-94, Ala-120–Ile-140, and Gly-170–Phe-190. Residues His-191–Glu-781 lie on the Cytoplasmic side of the membrane. Residues Gly-414 to Arg-623 form the FtsK domain. Gly-434–Val-439 is an ATP binding site.

It belongs to the FtsK/SpoIIIE/SftA family. As to quaternary structure, homohexamer. Forms a ring that surrounds DNA.

The protein localises to the cell inner membrane. In terms of biological role, essential cell division protein that coordinates cell division and chromosome segregation. The N-terminus is involved in assembly of the cell-division machinery. The C-terminus functions as a DNA motor that moves dsDNA in an ATP-dependent manner towards the dif recombination site, which is located within the replication terminus region. Translocation stops specifically at Xer-dif sites, where FtsK interacts with the Xer recombinase, allowing activation of chromosome unlinking by recombination. FtsK orienting polar sequences (KOPS) guide the direction of DNA translocation. FtsK can remove proteins from DNA as it translocates, but translocation stops specifically at XerCD-dif site, thereby preventing removal of XerC and XerD from dif. The chain is DNA translocase FtsK 2 (ftsK2) from Ralstonia nicotianae (strain ATCC BAA-1114 / GMI1000) (Ralstonia solanacearum).